The primary structure comprises 204 residues: Pyrrolidone-carboxylate peptidase (204 aa).

Active-site residues include Glu80, Cys142, and His165.

This sequence belongs to the peptidase C15 family. Homotetramer.

Its subcellular location is the cytoplasm. The enzyme catalyses Release of an N-terminal pyroglutamyl group from a polypeptide, the second amino acid generally not being Pro.. Functionally, removes 5-oxoproline from various penultimate amino acid residues except L-proline. This chain is Pyrrolidone-carboxylate peptidase, found in Lysinibacillus sphaericus (strain C3-41).